The chain runs to 315 residues: Borealin (315 aa).

Disordered regions lie at residues Ile103 to Gly126 and Leu138 to Met226. At Thr146 the chain carries Phosphothreonine. At Ser152 the chain carries Phosphoserine. Residues Ala153–Arg162 show a composition bias toward basic residues. Ser163 carries the post-translational modification Phosphoserine. Residues Ser178 to Asn188 show a composition bias toward low complexity. A Phosphoserine modification is found at Ser205. Thr209 carries the phosphothreonine modification. 3 positions are modified to phosphoserine: Ser218, Ser220, and Ser244.

It belongs to the borealin family. Component of the CPC complex. Ubiquitously expressed in the early embryo. Expression is restricted to the ventral nerve cord and brain during later embryonic stages.

The protein localises to the nucleus. It localises to the chromosome. Its subcellular location is the centromere. The protein resides in the cytoplasm. It is found in the cytoskeleton. The protein localises to the spindle. In terms of biological role, component of the chromosomal passenger complex (CPC), a complex that acts as a key regulator of embryonic mitosis. The CPC complex has essential functions at the centromere for ensuring sister chromatid cohesion, recruitment of the CPC to kinetochores, and chromosome alignment and segregation. There is no function in meiotic histone phosphorylation or spindle formation. The sequence is that of Borealin (borr) from Drosophila melanogaster (Fruit fly).